The sequence spans 531 residues: Flavin-containing monooxygenase 3 (531 aa).

FAD is bound by residues 9-13 (GAGIS), glutamate 32, 40-41 (LW), and 61-62 (NS). NADP(+)-binding positions include 60–61 (TN) and 195–198 (SGCD). The chain crosses the membrane as a helical span at residues 511–531 (FSPWLKLLAIAVLLIAAVLVF).

The protein belongs to the FMO family. It depends on FAD as a cofactor. As to expression, liver.

The protein localises to the microsome membrane. The protein resides in the endoplasmic reticulum membrane. The enzyme catalyses trimethylamine + NADPH + O2 = trimethylamine N-oxide + NADP(+) + H2O. The catalysed reaction is N,N-dimethylaniline + NADPH + O2 + H(+) = N,N-dimethylaniline N-oxide + NADP(+) + H2O. It carries out the reaction hypotaurine + NADPH + O2 + H(+) = taurine + NADP(+) + H2O. It catalyses the reaction (S)-nicotine + NADPH + O2 = trans-(S)-nicotine N(1')-oxide + NADP(+) + H2O. The enzyme catalyses albendazole + NADPH + O2 + H(+) = albendazole S-oxide + NADP(+) + H2O. Its function is as follows. Essential hepatic enzyme that catalyzes the oxygenation of a wide variety of nitrogen- and sulfur-containing compounds including drugs as well as dietary compounds. Plays an important role in the metabolism of trimethylamine (TMA), via the production of trimethylamine N-oxide (TMAO) metabolite. TMA is generated by the action of gut microbiota using dietary precursors such as choline, choline containing compounds, betaine or L-carnitine. By regulating TMAO concentration, FMO3 directly impacts both platelet responsiveness and rate of thrombus formation. The polypeptide is Flavin-containing monooxygenase 3 (FMO3) (Oryctolagus cuniculus (Rabbit)).